The primary structure comprises 145 residues: D-aminoacyl-tRNA deacylase (145 aa).

Residues 137–138 (GP) carry the Gly-cisPro motif, important for rejection of L-amino acids motif.

This sequence belongs to the DTD family. In terms of assembly, homodimer.

The protein localises to the cytoplasm. It catalyses the reaction glycyl-tRNA(Ala) + H2O = tRNA(Ala) + glycine + H(+). The enzyme catalyses a D-aminoacyl-tRNA + H2O = a tRNA + a D-alpha-amino acid + H(+). Functionally, an aminoacyl-tRNA editing enzyme that deacylates mischarged D-aminoacyl-tRNAs. Also deacylates mischarged glycyl-tRNA(Ala), protecting cells against glycine mischarging by AlaRS. Acts via tRNA-based rather than protein-based catalysis; rejects L-amino acids rather than detecting D-amino acids in the active site. By recycling D-aminoacyl-tRNA to D-amino acids and free tRNA molecules, this enzyme counteracts the toxicity associated with the formation of D-aminoacyl-tRNA entities in vivo and helps enforce protein L-homochirality. This Pelobacter propionicus (strain DSM 2379 / NBRC 103807 / OttBd1) protein is D-aminoacyl-tRNA deacylase.